A 131-amino-acid chain; its full sequence is Global transcriptional regulator Spx (131 aa).

An intrachain disulfide couples C10 to C13.

The protein belongs to the ArsC family. Spx subfamily. In terms of assembly, interacts with the C-terminal domain of the alpha subunit of the RNAP.

It is found in the cytoplasm. Global transcriptional regulator that plays a key role in stress response and exerts either positive or negative regulation of genes. Acts by interacting with the C-terminal domain of the alpha subunit of the RNA polymerase (RNAP). This interaction can enhance binding of RNAP to the promoter region of target genes and stimulate their transcription, or block interaction of RNAP with activator. The protein is Global transcriptional regulator Spx of Staphylococcus saprophyticus subsp. saprophyticus (strain ATCC 15305 / DSM 20229 / NCIMB 8711 / NCTC 7292 / S-41).